The sequence spans 271 residues: uncharacterized protein (271 aa).

3 helical membrane-spanning segments follow: residues 30–50 (IWFP…GMLL), 189–209 (ALAA…YFLI), and 218–238 (FLVT…IFAC).

The protein localises to the cell membrane. This is an uncharacterized protein from Aquifex aeolicus (strain VF5).